The primary structure comprises 215 residues: Cytochrome b6 (215 aa).

The chain crosses the membrane as a helical span at residues I32–F52. C35 is a heme c binding site. Heme b contacts are provided by H86 and H100. A run of 3 helical transmembrane segments spans residues A90–F110, L116–Y136, and L186–I206. The heme b site is built by H187 and H202.

The protein belongs to the cytochrome b family. PetB subfamily. As to quaternary structure, the 4 large subunits of the cytochrome b6-f complex are cytochrome b6, subunit IV (17 kDa polypeptide, PetD), cytochrome f and the Rieske protein, while the 4 small subunits are PetG, PetL, PetM and PetN. The complex functions as a dimer. Heme b serves as cofactor. Requires heme c as cofactor.

It is found in the plastid. It localises to the chloroplast thylakoid membrane. Functionally, component of the cytochrome b6-f complex, which mediates electron transfer between photosystem II (PSII) and photosystem I (PSI), cyclic electron flow around PSI, and state transitions. This chain is Cytochrome b6, found in Pinus koraiensis (Korean pine).